A 91-amino-acid chain; its full sequence is DNA/RNA-binding protein Alba (91 aa).

It belongs to the histone-like Alba family.

Its subcellular location is the cytoplasm. The protein localises to the chromosome. Functionally, binds double-stranded DNA tightly but without sequence specificity. Involved in DNA compaction. The polypeptide is DNA/RNA-binding protein Alba (Methanoculleus marisnigri (strain ATCC 35101 / DSM 1498 / JR1)).